The following is a 501-amino-acid chain: Aldehyde dehydrogenase 1A1 (501 aa).

Position 2 is an N-acetylserine (Ser2). N6-acetyllysine is present on residues Lys91 and Lys128. NAD(+)-binding positions include 167-170 (IPWN), 193-196 (KPAE), 226-227 (GP), and 246-247 (GS). Position 252 is an N6-acetyllysine (Lys252). Residue Glu269 is the Proton acceptor of the active site. 269 to 271 (ELG) contributes to the NAD(+) binding site. Cys303 acts as the Nucleophile in catalysis. Residues 336 to 501 (LNSGINQGPQ…VAIKISQKNS (166 aa)) form a mediates interaction with PRMT3 region. 349–353 (EQHDK) serves as a coordination point for NAD(+). 2 positions are modified to N6-acetyllysine: Lys353 and Lys367. Residue 400–402 (EIF) participates in NAD(+) binding. At Lys410 the chain carries N6-acetyllysine. Ser413 is subject to Phosphoserine. N6-acetyllysine is present on residues Lys419, Lys435, and Lys495.

The protein belongs to the aldehyde dehydrogenase family. In terms of assembly, homotetramer. Interacts with PRMT3; the interaction is direct, inhibits ALDH1A1 aldehyde dehydrogenase activity and is independent of the methyltransferase activity of PRMT3. The N-terminus is blocked most probably by acetylation.

The protein resides in the cytoplasm. Its subcellular location is the cytosol. It is found in the cell projection. It localises to the axon. The enzyme catalyses an aldehyde + NAD(+) + H2O = a carboxylate + NADH + 2 H(+). It carries out the reaction all-trans-retinal + NAD(+) + H2O = all-trans-retinoate + NADH + 2 H(+). The catalysed reaction is 9-cis-retinal + NAD(+) + H2O = 9-cis-retinoate + NADH + 2 H(+). It catalyses the reaction 11-cis-retinal + NAD(+) + H2O = 11-cis-retinoate + NADH + 2 H(+). The enzyme catalyses 13-cis-retinal + NAD(+) + H2O = 13-cis-retinoate + NADH + 2 H(+). It carries out the reaction 3-deoxyglucosone + NAD(+) + H2O = 2-dehydro-3-deoxy-D-gluconate + NADH + 2 H(+). The catalysed reaction is (E)-4-hydroxynon-2-enal + NAD(+) + H2O = (E)-4-hydroxynon-2-enoate + NADH + 2 H(+). It catalyses the reaction malonaldehyde + NAD(+) + H2O = 3-oxopropanoate + NADH + 2 H(+). The enzyme catalyses hexanal + NAD(+) + H2O = hexanoate + NADH + 2 H(+). It carries out the reaction propanal + NAD(+) + H2O = propanoate + NADH + 2 H(+). The catalysed reaction is acetaldehyde + NAD(+) + H2O = acetate + NADH + 2 H(+). It catalyses the reaction benzaldehyde + NAD(+) + H2O = benzoate + NADH + 2 H(+). The enzyme catalyses 4-aminobutanal + NAD(+) + H2O = 4-aminobutanoate + NADH + 2 H(+). Its pathway is cofactor metabolism; retinol metabolism. Functionally, cytosolic dehydrogenase that catalyzes the irreversible oxidation of a wide range of aldehydes to their corresponding carboxylic acid. Functions downstream of retinol dehydrogenases and catalyzes the oxidation of retinaldehyde into retinoic acid, the second step in the oxidation of retinol/vitamin A into retinoic acid. This pathway is crucial to control the levels of retinol and retinoic acid, two important molecules which excess can be teratogenic and cytotoxic. Also oxidizes aldehydes resulting from lipid peroxidation like (E)-4-hydroxynon-2-enal/HNE, malonaldehyde and hexanal that form protein adducts and are highly cytotoxic. By participating for instance to the clearance of (E)-4-hydroxynon-2-enal/HNE in the lens epithelium prevents the formation of HNE-protein adducts and lens opacification. Also functions downstream of fructosamine-3-kinase in the fructosamine degradation pathway by catalyzing the oxidation of 3-deoxyglucosone, the carbohydrate product of fructosamine 3-phosphate decomposition, which is itself a potent glycating agent that may react with lysine and arginine side-chains of proteins. Also has an aminobutyraldehyde dehydrogenase activity and is probably part of an alternative pathway for the biosynthesis of GABA/4-aminobutanoate in midbrain, thereby playing a role in GABAergic synaptic transmission. The polypeptide is Aldehyde dehydrogenase 1A1 (Mesocricetus auratus (Golden hamster)).